The following is a 90-amino-acid chain: MSEESQASQASQACQAKACAIQDCLQGNGYNEAKCTKYIDDLYQCCKNFYEENGVDAKSVCCPKFKLLQLKLKQRSLGQIDATLLENKRH.

The 43-residue stretch at 11-53 folds into the CHCH domain; sequence SQACQAKACAIQDCLQGNGYNEAKCTKYIDDLYQCCKNFYEEN. Short sequence motifs (cx9C motif) lie at residues 14-24 and 35-45; these read CQAKACAIQDC and CTKYIDDLYQC. Disulfide bonds link C14–C45 and C24–C35.

This sequence belongs to the CMC4 family.

Its subcellular location is the mitochondrion intermembrane space. In Lodderomyces elongisporus (strain ATCC 11503 / CBS 2605 / JCM 1781 / NBRC 1676 / NRRL YB-4239) (Yeast), this protein is Cx9C motif-containing protein 4, mitochondrial (CMC4).